Reading from the N-terminus, the 751-residue chain is Methionine--tRNA ligase, cytoplasmic (751 aa).

Ser2 is modified (N-acetylserine). The segment at Leu36 to Tyr92 is interaction with ARC1. The 'HIGH' region motif lies at Pro205–Asn215. Position 411 (Lys411) interacts with ATP. Positions Lys525–Ser529 match the 'KMSKS' region motif.

Belongs to the class-I aminoacyl-tRNA synthetase family. In terms of assembly, component of a yeast aminoacyl-tRNA synthase (aaRS) complex formed by methionyl-tRNA synthase MES1, glutamyl-tRNA synthase GUS1 and the tRNA aminoacylation cofactor ARC1 in a stoichiometric complex. Interacts (via N-ter) with ARC1 (via N-ter). Can also form a stable binary complex with ARC1 that is functional in terms of aminoacylation. ARC1 increases the affinity for cognate tRNAs due to the presence of a tRNA binding domain in the middle and C-terminal part of ARC1.

Its subcellular location is the cytoplasm. The enzyme catalyses tRNA(Met) + L-methionine + ATP = L-methionyl-tRNA(Met) + AMP + diphosphate. Its function is as follows. Catalyzes the attachment of methionine to tRNA(Met) in a two-step reaction: methionine is first activated by ATP to form Met-AMP and then transferred to the acceptor end of tRNA(Met). This chain is Methionine--tRNA ligase, cytoplasmic (MES1), found in Saccharomyces cerevisiae (strain ATCC 204508 / S288c) (Baker's yeast).